Reading from the N-terminus, the 194-residue chain is Orotate phosphoribosyltransferase (194 aa).

Residue 114–122 participates in 5-phospho-alpha-D-ribose 1-diphosphate binding; the sequence is EDVVTTGKS. Residues T118 and R146 each coordinate orotate.

It belongs to the purine/pyrimidine phosphoribosyltransferase family. PyrE subfamily. In terms of assembly, homodimer. The cofactor is Mg(2+).

It carries out the reaction orotidine 5'-phosphate + diphosphate = orotate + 5-phospho-alpha-D-ribose 1-diphosphate. Its pathway is pyrimidine metabolism; UMP biosynthesis via de novo pathway; UMP from orotate: step 1/2. Catalyzes the transfer of a ribosyl phosphate group from 5-phosphoribose 1-diphosphate to orotate, leading to the formation of orotidine monophosphate (OMP). In Clostridioides difficile (strain 630) (Peptoclostridium difficile), this protein is Orotate phosphoribosyltransferase.